Consider the following 308-residue polypeptide: Ribosomal RNA small subunit methyltransferase H (308 aa).

S-adenosyl-L-methionine-binding positions include 33–35 (GGY), D51, F82, D96, and Q103.

Belongs to the methyltransferase superfamily. RsmH family.

It localises to the cytoplasm. The catalysed reaction is cytidine(1402) in 16S rRNA + S-adenosyl-L-methionine = N(4)-methylcytidine(1402) in 16S rRNA + S-adenosyl-L-homocysteine + H(+). Functionally, specifically methylates the N4 position of cytidine in position 1402 (C1402) of 16S rRNA. This is Ribosomal RNA small subunit methyltransferase H from Rickettsia canadensis (strain McKiel).